The sequence spans 617 residues: Dihydroxy-acid dehydratase (617 aa).

Asp81 lines the Mg(2+) pocket. Cys122 lines the [2Fe-2S] cluster pocket. Residues Asp123 and Lys124 each coordinate Mg(2+). Lys124 is modified (N6-carboxylysine). [2Fe-2S] cluster is bound at residue Cys195. Glu491 provides a ligand contact to Mg(2+). Ser517 (proton acceptor) is an active-site residue.

The protein belongs to the IlvD/Edd family. As to quaternary structure, homodimer. [2Fe-2S] cluster serves as cofactor. Requires Mg(2+) as cofactor.

It catalyses the reaction (2R)-2,3-dihydroxy-3-methylbutanoate = 3-methyl-2-oxobutanoate + H2O. It carries out the reaction (2R,3R)-2,3-dihydroxy-3-methylpentanoate = (S)-3-methyl-2-oxopentanoate + H2O. It participates in amino-acid biosynthesis; L-isoleucine biosynthesis; L-isoleucine from 2-oxobutanoate: step 3/4. Its pathway is amino-acid biosynthesis; L-valine biosynthesis; L-valine from pyruvate: step 3/4. Functionally, functions in the biosynthesis of branched-chain amino acids. Catalyzes the dehydration of (2R,3R)-2,3-dihydroxy-3-methylpentanoate (2,3-dihydroxy-3-methylvalerate) into 2-oxo-3-methylpentanoate (2-oxo-3-methylvalerate) and of (2R)-2,3-dihydroxy-3-methylbutanoate (2,3-dihydroxyisovalerate) into 2-oxo-3-methylbutanoate (2-oxoisovalerate), the penultimate precursor to L-isoleucine and L-valine, respectively. This chain is Dihydroxy-acid dehydratase, found in Hydrogenovibrio crunogenus (strain DSM 25203 / XCL-2) (Thiomicrospira crunogena).